Reading from the N-terminus, the 344-residue chain is MCAVLRQPKCVKLRALHSACKFGVAARSCQELLRKGCVRFQLPMPGSRLCLYEDGTEVTDDCFPGLPNDAELLLLTAGETWHGYVSDITRFLSVFNEPHAGVIQAARQLLSDEQAPLRQKLLADLLHHVSQNITAETREQDPSWFEGLESRFRNKSGYLRYSCESRIRGYLREVSAYTSMVDEAAQEEYLRVLGSMCQKLKSVQYNGSYFDRGAEASSRLCTPEGWFSCQGPFDLESCLSKHSINPYGNRESRILFSTWNLDHIIEKKRTVVPTLAEAIQDGREVNWEYFYSLLFTAENLKLVHIACHKKTTHKLECDRSRIYRPQTGSRRKQPARKKRPARKR.

A CIDE-N domain is found at 7 to 83 (QPKCVKLRAL…LLTAGETWHG (77 aa)).

As to quaternary structure, heterodimer of DFFA and DFFB. Interacts with H1-1.

The protein localises to the cytoplasm. The protein resides in the nucleus. Inhibited by DFFA (DFF45). Nuclease that induces DNA fragmentation and chromatin condensation during apoptosis. Degrades naked DNA and induces apoptotic morphology. The protein is DNA fragmentation factor subunit beta (Dffb) of Mus musculus (Mouse).